A 196-amino-acid polypeptide reads, in one-letter code: ATP-dependent Clp protease proteolytic subunit (196 aa).

Ser-101 acts as the Nucleophile in catalysis. His-126 is a catalytic residue.

This sequence belongs to the peptidase S14 family. Component of the chloroplastic Clp protease core complex.

It localises to the plastid. It is found in the chloroplast stroma. It catalyses the reaction Hydrolysis of proteins to small peptides in the presence of ATP and magnesium. alpha-casein is the usual test substrate. In the absence of ATP, only oligopeptides shorter than five residues are hydrolyzed (such as succinyl-Leu-Tyr-|-NHMec, and Leu-Tyr-Leu-|-Tyr-Trp, in which cleavage of the -Tyr-|-Leu- and -Tyr-|-Trp bonds also occurs).. In terms of biological role, cleaves peptides in various proteins in a process that requires ATP hydrolysis. Has a chymotrypsin-like activity. Plays a major role in the degradation of misfolded proteins. This chain is ATP-dependent Clp protease proteolytic subunit, found in Lotus japonicus (Lotus corniculatus var. japonicus).